The chain runs to 559 residues: Transmembrane E3 ubiquitin-protein ligase FLY2 (559 aa).

The signal sequence occupies residues 1–29; sequence MNNLGNFGVWGFGFFSLSIWFAVLQQANG. The Lumenal segment spans residues 30 to 259; it reads LRPIRETARS…TSINVEVYYN (230 aa). The chain crosses the membrane as a helical span at residues 260–280; it reads KAVNYTLMVTFVSFLQVLLLI. The Cytoplasmic portion of the chain corresponds to 281 to 294; it reads RQMEHSNTQSGAAK. The chain crosses the membrane as a helical span at residues 295 to 315; sequence VSIVMIGQQAIMDSYLCLLHL. The Lumenal segment spans residues 316 to 318; the sequence is TAG. Residues 319 to 339 traverse the membrane as a helical segment; that stretch reads ILVESLFNAFATAAFFKFVVF. Over 340–370 the chain is Cytoplasmic; the sequence is SIFEMRYLLSIWKATRPSTSGEGWETMRREL. The chain crosses the membrane as a helical span at residues 371 to 391; the sequence is SFLYSRFYGILLGGILLMYEF. Over 392 to 394 the chain is Lumenal; it reads HNY. A helical transmembrane segment spans residues 395–415; that stretch reads MRPILLLMYSFWIPQIVANVV. Residues 416-423 lie on the Cytoplasmic side of the membrane; it reads RDSRKPLH. A helical membrane pass occupies residues 424–444; the sequence is PYYILGMTVTRLAIPLYVFGC. Residues 445–458 are Lumenal-facing; the sequence is PKNFMRVEPSKAWC. Residues 459–479 traverse the membrane as a helical segment; it reads VSLCAFMGFQAGVLLLQHYFG. At 480–559 the chain is on the cytoplasmic side; that stretch reads SRCFVPRKLL…PTCRRPLPPA (80 aa). An RING-type; atypical zinc finger spans residues 509–553; sequence CVICMTTIDLRHRINDCMVTPCEHIFHSGCLQRWMDIKMECPTCR.

Highly expressed in stems. Expressed in root xylem and seed coat.

It localises to the endomembrane system. The enzyme catalyses S-ubiquitinyl-[E2 ubiquitin-conjugating enzyme]-L-cysteine + [acceptor protein]-L-lysine = [E2 ubiquitin-conjugating enzyme]-L-cysteine + N(6)-ubiquitinyl-[acceptor protein]-L-lysine.. It participates in protein modification; protein ubiquitination. E3 ubiquitin-protein ligase that may be involved in xylem development. This chain is Transmembrane E3 ubiquitin-protein ligase FLY2, found in Arabidopsis thaliana (Mouse-ear cress).